We begin with the raw amino-acid sequence, 303 residues long: Diacylglycerol kinase (303 aa).

One can recognise a DAGKc domain in the interval M1–Y132. Residues N9–G13, T40, G66–E72, and T93 contribute to the ATP site. Mg(2+) contacts are provided by S213, D216, and M218. The Proton acceptor role is filled by E273.

Belongs to the diacylglycerol/lipid kinase family. Requires Mg(2+) as cofactor.

It carries out the reaction a 1,2-diacyl-sn-glycerol + ATP = a 1,2-diacyl-sn-glycero-3-phosphate + ADP + H(+). The catalysed reaction is 1,2-di-(9Z-octadecenoyl)-sn-glycerol + ATP = 1,2-di-(9Z-octadecenoyl)-sn-glycero-3-phosphate + ADP + H(+). Its function is as follows. Catalyzes the phosphorylation of diacylglycerol (DAG) into phosphatidic acid. Is a key enzyme involved in the production of lipoteichoic acid by reintroducing DAG formed from the breakdown of membrane phospholipids into the phosphatidylglycerol biosynthetic pathway. Is more active toward long-chain DAG compared with short-chain DAG. Is not able to phosphorylate substrates other than DAG, such as monoacylglycerol, ceramide, undecaprenol, phosphatidylinositol, or sphingosine. In Bacillus subtilis (strain 168), this protein is Diacylglycerol kinase (dagK).